The chain runs to 339 residues: MRVYYDRDADVNLIKSKKVAVIGYGSQGHAHVLNLRDSGVKDVAVALRPGSASIKKAEAEGLKVLTPAEAAAWADVVMILTPDELQADLYKSELAANLKPGAALVFAHGLAIHFKLIEARADLDVFMVAPKGPGHTVRGEYLKGGGVPCLVAVAQNPTGNALELALSYASAIGGGRSGIIETTFREECETDLFGEQVVLCGGLSKLIQYGFETLVEAGYAPEMAYFECLHEVKLIVDLIYEGGIANMRYSISNTAEYGDYVTGSRIITEATKAEMKRVLADIQSGRFVRDWMLECKAGQPSFKATRRIQXEHVIEVVGEKLRGMMPWISKNKLVDKARN.

One can recognise a KARI N-terminal Rossmann domain in the interval Met-1 to Thr-182. Residues Tyr-24 to Gln-27, Arg-48, Ser-51, Ser-53, and Asp-83 to Gln-86 contribute to the NADP(+) site. His-108 is a catalytic residue. Gly-134 contributes to the NADP(+) binding site. In terms of domain architecture, KARI C-terminal knotted spans Thr-183–Ile-328. 4 residues coordinate Mg(2+): Asp-191, Glu-195, Glu-227, and Glu-231. Ser-252 provides a ligand contact to substrate.

This sequence belongs to the ketol-acid reductoisomerase family. It depends on Mg(2+) as a cofactor.

It catalyses the reaction (2R)-2,3-dihydroxy-3-methylbutanoate + NADP(+) = (2S)-2-acetolactate + NADPH + H(+). The catalysed reaction is (2R,3R)-2,3-dihydroxy-3-methylpentanoate + NADP(+) = (S)-2-ethyl-2-hydroxy-3-oxobutanoate + NADPH + H(+). The protein operates within amino-acid biosynthesis; L-isoleucine biosynthesis; L-isoleucine from 2-oxobutanoate: step 2/4. It participates in amino-acid biosynthesis; L-valine biosynthesis; L-valine from pyruvate: step 2/4. Involved in the biosynthesis of branched-chain amino acids (BCAA). Catalyzes an alkyl-migration followed by a ketol-acid reduction of (S)-2-acetolactate (S2AL) to yield (R)-2,3-dihydroxy-isovalerate. In the isomerase reaction, S2AL is rearranged via a Mg-dependent methyl migration to produce 3-hydroxy-3-methyl-2-ketobutyrate (HMKB). In the reductase reaction, this 2-ketoacid undergoes a metal-dependent reduction by NADPH to yield (R)-2,3-dihydroxy-isovalerate. The protein is Ketol-acid reductoisomerase (NADP(+)) of Magnetospirillum molischianum (Rhodospirillum molischianum).